The sequence spans 248 residues: Superoxide dismutase [Mn] 1 (248 aa).

Positions 1-41 (MQTTFRRILILFVGLLVPLFFACQSNSQVDAAPSAAPQLSA) are cleaved as a signal peptide. Residues His68, His123, Asp208, and His212 each coordinate Mn(2+).

It belongs to the iron/manganese superoxide dismutase family. In terms of assembly, homodimer. Mn(2+) is required as a cofactor.

It catalyses the reaction 2 superoxide + 2 H(+) = H2O2 + O2. Destroys superoxide anion radicals which are normally produced within the cells and which are toxic to biological systems. This chain is Superoxide dismutase [Mn] 1 (sodA1), found in Leptolyngbya boryana (Plectonema boryanum).